We begin with the raw amino-acid sequence, 61 residues long: uncharacterized protein (61 aa).

Positions 36–61 are disordered; that stretch reads RLTDVPPQPNSPPDNVFNPDQPRMGP.

It belongs to the ART2/RRT15 family.

This is an uncharacterized protein from Saccharomyces cerevisiae (strain ATCC 204508 / S288c) (Baker's yeast).